We begin with the raw amino-acid sequence, 135 residues long: Envelope glycoprotein N (135 aa).

The signal sequence occupies residues M1 to S19. The Virion surface portion of the chain corresponds to N20 to S98. Positions N21–T68 are enriched in low complexity. Residues N21–V73 are disordered. A helical membrane pass occupies residues F99–L119. At R120–Y135 the chain is on the intravirion side.

The protein belongs to the herpesviridae glycoprotein N family. As to quaternary structure, interacts (via N-terminus) with gM (via N-terminus). The gM-gN heterodimer forms the gCII complex. In terms of processing, O-glycosylated.

It is found in the virion membrane. The protein resides in the host membrane. Its subcellular location is the host Golgi apparatus. The protein localises to the host trans-Golgi network. Functionally, envelope glycoprotein necessary for proper maturation of gM and modulation of its membrane fusion activity. Also plays a critical role in virion morphogenesis. This is Envelope glycoprotein N from Homo sapiens (Human).